The chain runs to 222 residues: MSSNNSNQDNFIRFALEAKVLSFGEFKTKAGRLSPYFFNAGGFNDGARLSALGRYYAKALQESNIQFDMLYGPAYKGITLAAATVIALADAGLNVPYAYNRKEAKDHGEGGVLVGAPVKGKVVIIDDVISAGTSVRESVDLIRKAGAEPTAVLIALDRMERSGTAAEIGAKSAVQAVEEEFGLPVISIANLTGVMSFLTASSDVQLSNYLPAVKAYRDKYGI.

K29 is a binding site for 5-phospho-alpha-D-ribose 1-diphosphate. Residue F37–F38 coordinates orotate. 5-phospho-alpha-D-ribose 1-diphosphate is bound by residues Y75–K76, R101, K102, K105, H107, and D126–S134. Residues S130 and R158 each contribute to the orotate site.

The protein belongs to the purine/pyrimidine phosphoribosyltransferase family. PyrE subfamily. As to quaternary structure, homodimer. The cofactor is Mg(2+).

It catalyses the reaction orotidine 5'-phosphate + diphosphate = orotate + 5-phospho-alpha-D-ribose 1-diphosphate. It functions in the pathway pyrimidine metabolism; UMP biosynthesis via de novo pathway; UMP from orotate: step 1/2. Functionally, catalyzes the transfer of a ribosyl phosphate group from 5-phosphoribose 1-diphosphate to orotate, leading to the formation of orotidine monophosphate (OMP). The protein is Orotate phosphoribosyltransferase of Polynucleobacter asymbioticus (strain DSM 18221 / CIP 109841 / QLW-P1DMWA-1) (Polynucleobacter necessarius subsp. asymbioticus).